Consider the following 1243-residue polypeptide: MLASPATETTVLMSQTEADLALRPPPPLGTAGQPRLGPPPRRARRFSGKAEPRPRSSRLSRRSSVDLGLLSSWSLPASPAPDPPDPPDSAGPGPARSPPPSSKEPPEGTWTEGAPVKAAEDSARPELPDSAVGPGSREPLRVPEAVALERRREQEEKEDMETQAVATSPDGRYLKFDIEIGRGSFKTVYRGLDTDTTVEVAWCELQTRKLSRAERQRFSEEVEMLKGLQHPNIVRFYDSWKSVLRGQVCIVLVTELMTSGTLKTYLRRFREMKPRVLQRWSRQILRGLHFLHSRVPPILHRDLKCDNVFITGPTGSVKIGDLGLATLKRASFAKSVIGTPEFMAPEMYEEKYDEAVDVYAFGMCMLEMATSEYPYSECQNAAQIYRKVTSGRKPNSFHKVKIPEVKEIIEGCIRTDKNERFTIQDLLAHAFFREERGVHVELAEEDDGEKPGLKLWLRMEDARRGGRPRDNQAIEFLFQLGRDAAEEVAQEMVALGLVCEADYQPVARAVRERVAAIQRKREKLRKARELEALPPEPGPPPATVPMAPGPPSVFPPEPEEPEADQHQPFLFRHASYSSTTSDCETDGYLSSSGFLDASDPALQPPGGVPSSLAESHLCLPSAFALSIPRSGPGSDFSPGDSYASDAASGLSDVGEGMGQMRRPPGRNLRRRPRSRLRVTSVSDQNDRVVECQLQTHNSKMVTFRFDLDGDSPEEIAAAMVYNEFILPSERDGFLRRIREIIQRVETLLKRDTGPMEAAEDTLSPQEEPAPLPALPVPLPDPSNEELQSSTSLEHRSWTAFSTSSSSPGTPLSPGNPFSPGTPISPGPIFPITSPPCHPSPSPFSPISSQVSSNPSPHPTSSPLPFSSSTPEFPVPLSQCPWSSLPTTSPPTFSPTCSQVTLSSPFFPPCPSTSSFPSTTAAPLLSLASAFSLAVMTVAQSLLSPSPGLLSQSPPAPPSPLPSLPLPPPVAPGGQESPSPHTAEVESEASPPPARPLPGEARLAPISEEGKPQLVGRFQVTSSKEPAEPLPLQPTSPTLSGSPKPSTPQLTSESSDTEDSAGGGPETREALAESDRAAEGLGAGVEEEGDDGKEPQVGGSPQPLSHPSPVWMNYSYSSLCLSSEESESSGEDEEFWAELQSLRQKHLSEVETLQTLQKKEIEDLYSRLGKQPPPGIVAPAAMLSSRQRRLSKGSFPTSRRNSLQRSEPPGPGIMRRNSLSGSSTGSQEQRASKGVTFAGDVGRM.

The segment covering Met-1–Glu-17 has biased composition (polar residues). The interval Met-1–Val-142 is disordered. Residues Val-65–Ala-77 show a composition bias toward low complexity. Residues Ser-78–Lys-103 show a composition bias toward pro residues. Position 97 is a phosphoserine (Ser-97). Positions Ala-118–Leu-127 are enriched in basic and acidic residues. Residues Lys-157 and Lys-175 each participate in a glycyl lysine isopeptide (Lys-Gly) (interchain with G-Cter in ubiquitin) cross-link. The Protein kinase domain occupies Leu-174–Phe-432. Residue Ser-184 coordinates ATP. Glycyl lysine isopeptide (Lys-Gly) (interchain with G-Cter in ubiquitin) cross-links involve residues Lys-186, Lys-226, and Lys-241. ATP is bound by residues Thr-254–Met-257 and Lys-304. The Proton acceptor role is filled by Asp-321. Lys-328 is covalently cross-linked (Glycyl lysine isopeptide (Lys-Gly) (interchain with G-Cter in ubiquitin)). A phosphoserine; by autocatalysis mark is found at Ser-331 and Ser-335. Residues Lys-387, Lys-393, Lys-450, and Lys-454 each participate in a glycyl lysine isopeptide (Lys-Gly) (interchain with G-Cter in ubiquitin) cross-link. The tract at residues Lys-526–Asp-564 is disordered. Positions Pro-534–Pro-556 are enriched in pro residues. Residues Glu-557 to Gln-567 are interaction with KLHL3. A Phosphoserine modification is found at Ser-575. The segment covering Ser-630 to Ser-641 has biased composition (low complexity). 3 disordered regions span residues Ser-630–Asp-683, Asp-751–Glu-871, and Ser-943–Trp-1110. The segment covering Pro-663–Leu-676 has biased composition (basic residues). The span at Glu-767 to Asp-780 shows a compositional bias: pro residues. A compositionally biased stretch (low complexity) spans Trp-797–Ser-812. Positions Pro-822–Phe-843 are enriched in pro residues. Low complexity-rich tracts occupy residues Ser-844–Pro-854, Pro-862–Glu-871, and Ser-943–Ser-952. The span at Pro-953–Ala-970 shows a compositional bias: pro residues. Lys-1010 participates in a covalent cross-link: Glycyl lysine isopeptide (Lys-Gly) (interchain with G-Cter in ubiquitin). The short motif at Arg-1016 to Val-1019 is the RFXV motif element. Ser-1035 is modified (phosphoserine). Positions Glu-1065–Ala-1077 are enriched in basic and acidic residues. Residues Lys-1144, Lys-1157, and Lys-1158 each participate in a glycyl lysine isopeptide (Lys-Gly) (interchain with G-Cter in ubiquitin) cross-link. The tract at residues Arg-1166 to Met-1243 is disordered. Polar residues-rich tracts occupy residues Ser-1193 to Arg-1204 and Asn-1216 to Gln-1228. Position 1217 is a phosphoserine (Ser-1217).

The protein belongs to the protein kinase superfamily. Ser/Thr protein kinase family. WNK subfamily. As to quaternary structure, interacts with the C-terminal region of KCNJ1. Mg(2+) serves as cofactor. Post-translationally, autophosphorylated at Ser-331 and Ser-335, promoting its activation. Phosphorylated by WNK1 and WNK3. Phosphorylated at Ser-575 in a MAP3K15/ASK3-dependent process in response to osmotic stress or hypotonic low-chloride stimulation. Ubiquitinated by the BCR(KLHL3) complex, leading to its degradation. Also ubiquitinated by the BCR(KLHL2) complex. In terms of tissue distribution, expressed in kidney, colon and skin.

The protein localises to the cell junction. It is found in the tight junction. It catalyses the reaction L-seryl-[protein] + ATP = O-phospho-L-seryl-[protein] + ADP + H(+). The catalysed reaction is L-threonyl-[protein] + ATP = O-phospho-L-threonyl-[protein] + ADP + H(+). Activation requires autophosphorylation of Ser-331 and Ser-335. Autophosphorylation and subsequent activation is inhibited by increases in intracellular ionic strength: Cl(-) potently inhibits WNK4 kinase activity via direct binding. Also inhibited by K(+) ions. In terms of biological role, serine/threonine-protein kinase component of the WNK4-SPAK/OSR1 kinase cascade, which acts as a key regulator of ion transport in the distal nephron and blood pressure. The WNK4-SPAK/OSR1 kinase cascade is composed of WNK4, which mediates phosphorylation and activation of downstream kinases OXSR1/OSR1 and STK39/SPAK. Following activation, OXSR1/OSR1 and STK39/SPAK catalyze phosphorylation of ion cotransporters, such as SLC12A1/NKCC2, SLC12A2/NKCC1, SLC12A3/NCC, SLC12A5/KCC2 or SLC12A6/KCC3, regulating their activity. Acts as a molecular switch that regulates the balance between renal salt reabsorption and K(+) secretion by modulating the activities of renal transporters and channels, including the Na-Cl cotransporter SLC12A3/NCC and the K(+) channel, KCNJ1/ROMK. Regulates NaCl reabsorption in the distal nephron by activating the thiazide-sensitive Na-Cl cotransporter SLC12A3/NCC in distal convoluted tubule cells of kidney: activates SLC12A3/NCC in a OXSR1/OSR1- and STK39/SPAK-dependent process. Also acts as a scaffold protein independently of its protein kinase activity: negatively regulates cell membrane localization of various transporters and channels (CFTR, KCNJ1/ROMK, SLC4A4, SLC26A9 and TRPV4) by clathrin-dependent endocytosis. Also inhibits the activity of the epithelial Na(+) channel (ENaC) SCNN1A, SCNN1B, SCNN1D in a inase-independent mechanism. May also phosphorylate NEDD4L. The protein is Serine/threonine-protein kinase WNK4 of Homo sapiens (Human).